We begin with the raw amino-acid sequence, 475 residues long: ATP synthase subunit beta 1 (475 aa).

152-159 (GGAGVGKT) contributes to the ATP binding site.

The protein belongs to the ATPase alpha/beta chains family. In terms of assembly, F-type ATPases have 2 components, CF(1) - the catalytic core - and CF(0) - the membrane proton channel. CF(1) has five subunits: alpha(3), beta(3), gamma(1), delta(1), epsilon(1). CF(0) has four main subunits: a(1), b(1), b'(1) and c(9-12).

Its subcellular location is the cell inner membrane. It carries out the reaction ATP + H2O + 4 H(+)(in) = ADP + phosphate + 5 H(+)(out). Its function is as follows. Produces ATP from ADP in the presence of a proton gradient across the membrane. The catalytic sites are hosted primarily by the beta subunits. The protein is ATP synthase subunit beta 1 of Cereibacter sphaeroides (strain ATCC 17029 / ATH 2.4.9) (Rhodobacter sphaeroides).